The sequence spans 129 residues: UPF0212 protein Mbar_A2902 (129 aa).

The protein belongs to the UPF0212 family.

The protein is UPF0212 protein Mbar_A2902 of Methanosarcina barkeri (strain Fusaro / DSM 804).